The primary structure comprises 969 residues: Probable Rho-type GTPase-activating protein 3 (969 aa).

2 consecutive LIM zinc-binding domains span residues 17–81 (TVCF…CTAC) and 76–135 (HTCT…RHPS). 3 disordered regions span residues 170-223 (IEIM…ADSL), 348-459 (ATSP…VEEL), and 613-646 (TSSK…SPNL). Positions 193–202 (ETPTNMSQAE) are enriched in polar residues. 2 stretches are compositionally biased toward low complexity: residues 212-223 (DSNLASNSADSL) and 350-361 (SPFRPFSPSYRS). Composition is skewed to polar residues over residues 369 to 392 (TRSP…SFAQ) and 418 to 432 (LSET…SLGS). A compositionally biased stretch (basic and acidic residues) spans 450 to 459 (SERDSDVEEL). Low complexity predominate over residues 613–623 (TSSKNTTSSIN). The segment covering 624-637 (PLTAVSSNSGQSSG) has biased composition (polar residues). The segment at 697 to 744 (DHVFHVNAIFKPSRCYICSESVWGSELRCFHCSISCHSRCLKRLFAES) adopts a Phorbol-ester/DAG-type zinc-finger fold. A Rho-GAP domain is found at 780–966 (RSLENQLKIE…FMLDNVDKIL (187 aa)).

In terms of assembly, interacts with dil1.

The protein localises to the cell tip. Its function is as follows. GTPase-activating protein for Rho-type proteins. This Schizosaccharomyces pombe (strain 972 / ATCC 24843) (Fission yeast) protein is Probable Rho-type GTPase-activating protein 3 (rga3).